The sequence spans 497 residues: Glycerol kinase (497 aa).

T13 lines the ADP pocket. Residues T13, T14, and S15 each coordinate ATP. T13 serves as a coordination point for sn-glycerol 3-phosphate. R17 is an ADP binding site. R83, E84, and Y135 together coordinate sn-glycerol 3-phosphate. 3 residues coordinate glycerol: R83, E84, and Y135. H231 is subject to Phosphohistidine; by HPr. D245 provides a ligand contact to sn-glycerol 3-phosphate. Glycerol is bound by residues D245 and Q246. Residues T267 and G310 each contribute to the ADP site. Residues T267, G310, Q314, and G411 each contribute to the ATP site. The ADP site is built by G411 and N415.

It belongs to the FGGY kinase family. Homotetramer and homodimer (in equilibrium). The phosphoenolpyruvate-dependent sugar phosphotransferase system (PTS), including enzyme I, and histidine-containing protein (HPr) are required for the phosphorylation, which leads to the activation of the enzyme.

The catalysed reaction is glycerol + ATP = sn-glycerol 3-phosphate + ADP + H(+). The protein operates within polyol metabolism; glycerol degradation via glycerol kinase pathway; sn-glycerol 3-phosphate from glycerol: step 1/1. Activated by phosphorylation and inhibited by fructose 1,6-bisphosphate (FBP). In terms of biological role, key enzyme in the regulation of glycerol uptake and metabolism. Catalyzes the phosphorylation of glycerol to yield sn-glycerol 3-phosphate. The sequence is that of Glycerol kinase from Listeria monocytogenes serotype 4a (strain HCC23).